The following is a 243-amino-acid chain: MILFPAIDLKDGQCVRLVHGLMDQATVFNDDPAAQARAFEEAGFEYIHLVDLNGAFEGKPVNAAAVESILAAISIPAQLGGGIRDLATIEMWLEKGVRRVIIGTAAVKNPALVIEACRKFPGRIAVGLDAKGGRVATEGWADVSDLTVLDMAGRFEDAGVAAIIYTDIDRDGALQGLNIEATVSLADAISIPVIASGGLSSIEDLKKLIAANCSGIEGAISGRALYDGRLDPSEALKLLRGVA.

The active-site Proton acceptor is aspartate 8. Aspartate 129 (proton donor) is an active-site residue.

Belongs to the HisA/HisF family.

It is found in the cytoplasm. It carries out the reaction 1-(5-phospho-beta-D-ribosyl)-5-[(5-phospho-beta-D-ribosylamino)methylideneamino]imidazole-4-carboxamide = 5-[(5-phospho-1-deoxy-D-ribulos-1-ylimino)methylamino]-1-(5-phospho-beta-D-ribosyl)imidazole-4-carboxamide. It functions in the pathway amino-acid biosynthesis; L-histidine biosynthesis; L-histidine from 5-phospho-alpha-D-ribose 1-diphosphate: step 4/9. This chain is 1-(5-phosphoribosyl)-5-[(5-phosphoribosylamino)methylideneamino] imidazole-4-carboxamide isomerase, found in Parvibaculum lavamentivorans (strain DS-1 / DSM 13023 / NCIMB 13966).